A 144-amino-acid polypeptide reads, in one-letter code: UPF0735 ACT domain-containing protein LSEI_1046 (144 aa).

The 76-residue stretch at 68–143 folds into the ACT domain; that stretch reads VISLMLHHDR…GVSDVHLVSV (76 aa).

It belongs to the UPF0735 family.

The sequence is that of UPF0735 ACT domain-containing protein LSEI_1046 from Lacticaseibacillus paracasei (strain ATCC 334 / BCRC 17002 / CCUG 31169 / CIP 107868 / KCTC 3260 / NRRL B-441) (Lactobacillus paracasei).